The following is a 366-amino-acid chain: Histidinol-phosphate aminotransferase 2 (366 aa).

The residue at position 226 (Lys-226) is an N6-(pyridoxal phosphate)lysine.

This sequence belongs to the class-II pyridoxal-phosphate-dependent aminotransferase family. Histidinol-phosphate aminotransferase subfamily. Homodimer. The cofactor is pyridoxal 5'-phosphate.

The enzyme catalyses L-histidinol phosphate + 2-oxoglutarate = 3-(imidazol-4-yl)-2-oxopropyl phosphate + L-glutamate. It functions in the pathway amino-acid biosynthesis; L-histidine biosynthesis; L-histidine from 5-phospho-alpha-D-ribose 1-diphosphate: step 7/9. This chain is Histidinol-phosphate aminotransferase 2 (hisC2), found in Haemophilus influenzae (strain ATCC 51907 / DSM 11121 / KW20 / Rd).